The chain runs to 203 residues: A-type ATP synthase subunit E (203 aa).

The protein belongs to the V-ATPase E subunit family. In terms of assembly, has multiple subunits with at least A(3), B(3), C, D, E, F, H, I and proteolipid K(x).

It localises to the cell membrane. In terms of biological role, component of the A-type ATP synthase that produces ATP from ADP in the presence of a proton gradient across the membrane. This Methanococcus maripaludis (strain C6 / ATCC BAA-1332) protein is A-type ATP synthase subunit E.